The primary structure comprises 499 residues: Gypsy retrotransposon integrase-like protein 1 (499 aa).

Positions 113 to 270 constitute an Integrase catalytic domain; that stretch reads KVENPWSIVT…TPYFQMFNRN (158 aa).

The chain is Gypsy retrotransposon integrase-like protein 1 (GIN1) from Bos taurus (Bovine).